A 62-amino-acid chain; its full sequence is Photosystem II reaction center X protein (62 aa).

A helical membrane pass occupies residues 26 to 46 (IASFFAAALLIVIPAAAFLIF).

Belongs to the PsbX family. Type 2 subfamily. In terms of assembly, PSII consists of a core antenna complex that captures photons, and an electron transfer chain that converts photonic excitation into a charge separation. PSII forms dimeric complexes.

The protein localises to the cellular thylakoid membrane. In terms of biological role, involved in the binding and/or turnover of quinones at the Q(B) site of Photosystem II. The protein is Photosystem II reaction center X protein of Prochlorococcus marinus subsp. pastoris (strain CCMP1986 / NIES-2087 / MED4).